The chain runs to 207 residues: Ribosomal RNA small subunit methyltransferase G (207 aa).

S-adenosyl-L-methionine is bound by residues glycine 74, leucine 79, 125–126 (VE), and arginine 140.

The protein belongs to the methyltransferase superfamily. RNA methyltransferase RsmG family.

It localises to the cytoplasm. The enzyme catalyses guanosine(527) in 16S rRNA + S-adenosyl-L-methionine = N(7)-methylguanosine(527) in 16S rRNA + S-adenosyl-L-homocysteine. Its function is as follows. Specifically methylates the N7 position of guanine in position 527 of 16S rRNA. The protein is Ribosomal RNA small subunit methyltransferase G of Shewanella halifaxensis (strain HAW-EB4).